The following is a 131-amino-acid chain: Leptin receptor gene-related protein (131 aa).

4 helical membrane passes run 7 to 27 (LVAL…GCAL), 32 to 52 (VYWP…HFIA), 69 to 89 (LAYF…VILA), and 100 to 120 (GLVL…FLVF).

This sequence belongs to the OB-RGRP/VPS55 family. As to quaternary structure, interacts with LEPR. Interacts with RAB13.

It is found in the golgi apparatus membrane. Its subcellular location is the endosome membrane. Functionally, negatively regulates leptin receptor (LEPR) cell surface expression, and thus decreases response to leptin/LEP. Negatively regulates growth hormone (GH) receptor cell surface expression in liver. May play a role in liver resistance to GH during periods of reduced nutrient availability. This Sus scrofa (Pig) protein is Leptin receptor gene-related protein (LEPROT).